A 403-amino-acid polypeptide reads, in one-letter code: S-adenosylmethionine synthase (403 aa).

H15 provides a ligand contact to ATP. A Mg(2+)-binding site is contributed by D17. Residue E43 coordinates K(+). Residues E56 and Q99 each contribute to the L-methionine site. Residues 99-109 (QSPDINQGVDR) are flexible loop. Residues 166-168 (DAK), 232-233 (KF), D241, 247-248 (RK), A264, and K268 each bind ATP. Position 241 (D241) interacts with L-methionine. K272 serves as a coordination point for L-methionine.

Belongs to the AdoMet synthase family. As to quaternary structure, homotetramer; dimer of dimers. Mg(2+) is required as a cofactor. It depends on K(+) as a cofactor.

Its subcellular location is the cytoplasm. It catalyses the reaction L-methionine + ATP + H2O = S-adenosyl-L-methionine + phosphate + diphosphate. Its pathway is amino-acid biosynthesis; S-adenosyl-L-methionine biosynthesis; S-adenosyl-L-methionine from L-methionine: step 1/1. Catalyzes the formation of S-adenosylmethionine (AdoMet) from methionine and ATP. The overall synthetic reaction is composed of two sequential steps, AdoMet formation and the subsequent tripolyphosphate hydrolysis which occurs prior to release of AdoMet from the enzyme. This is S-adenosylmethionine synthase from Xanthomonas campestris pv. campestris (strain 8004).